Here is a 234-residue protein sequence, read N- to C-terminus: Purine nucleoside phosphorylase DeoD-type (234 aa).

Residue histidine 4 coordinates a purine D-ribonucleoside. Residues glycine 20, arginine 24, arginine 43, and 87 to 90 each bind phosphate; that span reads RIGT. Residues 179–181 and 203–204 contribute to the a purine D-ribonucleoside site; these read EME and SD. Aspartate 204 acts as the Proton donor in catalysis.

The protein belongs to the PNP/UDP phosphorylase family. As to quaternary structure, homohexamer; trimer of homodimers.

It catalyses the reaction a purine D-ribonucleoside + phosphate = a purine nucleobase + alpha-D-ribose 1-phosphate. The enzyme catalyses a purine 2'-deoxy-D-ribonucleoside + phosphate = a purine nucleobase + 2-deoxy-alpha-D-ribose 1-phosphate. Catalyzes the reversible phosphorolytic breakdown of the N-glycosidic bond in the beta-(deoxy)ribonucleoside molecules, with the formation of the corresponding free purine bases and pentose-1-phosphate. This Helicobacter pylori (strain Shi470) protein is Purine nucleoside phosphorylase DeoD-type.